Consider the following 476-residue polypeptide: Glycogen synthase (476 aa).

Lys-15 lines the ADP-alpha-D-glucose pocket.

Belongs to the glycosyltransferase 1 family. Bacterial/plant glycogen synthase subfamily.

It carries out the reaction [(1-&gt;4)-alpha-D-glucosyl](n) + ADP-alpha-D-glucose = [(1-&gt;4)-alpha-D-glucosyl](n+1) + ADP + H(+). It functions in the pathway glycan biosynthesis; glycogen biosynthesis. Synthesizes alpha-1,4-glucan chains using ADP-glucose. In Yersinia pseudotuberculosis serotype O:1b (strain IP 31758), this protein is Glycogen synthase.